A 291-amino-acid polypeptide reads, in one-letter code: Polyamine aminopropyltransferase (291 aa).

The region spanning 5-245 (PGPIVLMEPL…YAVNFVLGSL (241 aa)) is the PABS domain. Gln36 is an S-methyl-5'-thioadenosine binding site. His67 and Glu91 together coordinate spermidine. S-methyl-5'-thioadenosine is bound by residues Asp111 and 143–144 (DG). Asp164 serves as the catalytic Proton acceptor.

Belongs to the spermidine/spermine synthase family. As to quaternary structure, homodimer or homotetramer.

Its subcellular location is the cytoplasm. The enzyme catalyses norspermidine + S-adenosyl 3-(methylsulfanyl)propylamine = norspermine + S-methyl-5'-thioadenosine + H(+). The catalysed reaction is S-adenosyl 3-(methylsulfanyl)propylamine + spermidine = thermospermine + S-methyl-5'-thioadenosine + H(+). Functionally, involved in the biosynthesis of polyamines which are thought to support the growth of thermophilic microorganisms under high-temperature conditions. It seems that long-chain and branched-chain of polyamines effectively stabilize DNA and RNA, respectively. Catalyzes the irreversible transfer of a propylamine group from the amino donor S-adenosylmethioninamine (decarboxy-AdoMet) to norspermidine and 1,3-diaminopropane to yield norspermine, and to spermidine to yield thermospermine. It can also synthesize thermospermine from putrescine (1,4-diaminobutane) and caldopentamine from norspermine with a very low activity. The biosynthesis of caldohexamine and caldoheptamine from caldopentamine has been also observed. This Pyrobaculum aerophilum (strain ATCC 51768 / DSM 7523 / JCM 9630 / CIP 104966 / NBRC 100827 / IM2) protein is Polyamine aminopropyltransferase.